Reading from the N-terminus, the 406-residue chain is Kelch domain-containing protein 2 (406 aa).

Kelch repeat units lie at residues 31-85, 92-136, 148-207, 221-259, 271-311, and 322-359; these read ERSG…NTEG, SGSC…ERID, LGVW…IWSQ, HACATVGNKGFVFGGRYRDARMNDLHYLNLDTWEWNELI, HSLT…IKFN, and HTACASDEGEVIVFGGCANNLLVHHRAAHSNEILIFSV.

As to quaternary structure, component of a CRL2(KLHDC2) E3 ubiquitin-protein ligase complex, also named ECS(KLHDC2) complex, composed of CUL2, Elongin BC (ELOB and ELOC), RBX1 and substrate-specific adapter KLHDC2. May form oligomers as a KLHDC2-ELOB-ELOC complex; this interaction is autoinhibitory for the E3 ligase complex as the substrate-binding site of KLHDC2 is blocked in the oligomer. Interacts with CREB3; interaction is direct and specific as it does not interact with CREB1, ATF4, ATF6, JUN, FOS, CEBPA or herpes simplex virus transactivator VP16. Post-translationally, autoubiquitinated by the CRL2(KLHDC2) E3 ligase complex.

It is found in the nucleus. The protein operates within protein modification; protein ubiquitination. In terms of biological role, substrate-recognition component of a Cul2-RING (CRL2) E3 ubiquitin-protein ligase complex of the DesCEND (destruction via C-end degrons) pathway, which recognizes a C-degron located at the extreme C terminus of target proteins, leading to their ubiquitination and degradation. The C-degron recognized by the DesCEND pathway is usually a motif of less than ten residues and can be present in full-length proteins, truncated proteins or proteolytically cleaved forms. The CRL2(KLHDC2) complex specifically recognizes proteins with a diglycine (Gly-Gly) at the C-terminus, leading to their ubiquitination and degradation. The CRL2(KLHDC2) complex mediates ubiquitination and degradation of truncated SELENOK and SELENOS selenoproteins produced by failed UGA/Sec decoding, which end with a diglycine. The CRL2(KLHDC2) complex also recognizes proteolytically cleaved proteins ending with Gly-Gly, such as the N-terminal fragment of USP1, leading to their degradation. May also act as an indirect repressor of CREB3-mediated transcription by interfering with CREB3-DNA-binding. This Bos taurus (Bovine) protein is Kelch domain-containing protein 2.